The chain runs to 156 residues: Large ribosomal subunit protein uL15 (156 aa).

Positions 25-48 (RGIGCGKGKTSGRGHKGQKARSGV) are disordered. The span at 34-43 (TSGRGHKGQK) shows a compositional bias: basic residues.

It belongs to the universal ribosomal protein uL15 family. In terms of assembly, part of the 50S ribosomal subunit.

Its function is as follows. Binds to the 23S rRNA. The polypeptide is Large ribosomal subunit protein uL15 (Wolbachia pipientis subsp. Culex pipiens (strain wPip)).